The sequence spans 660 residues: Long chain acyl-CoA synthetase 1 (660 aa).

225–236 (IMYTSGTSGDPK) is an ATP binding site. The interval 492–516 (DGWFHTGDIGEILPNGVLKIIDRKK) is fatty acid-binding.

It belongs to the ATP-dependent AMP-binding enzyme family. Mg(2+) is required as a cofactor. In terms of tissue distribution, epidermal-specific expression along the entire stem. In cauline leaves, was expressed over the entire leaf surface, most strongly in trichomes and guard cells, but not in mesophyll cells. In flowers, the expression was detected in the stigma and filaments of the stamens, and in the carpel was expressed specifically in ovaries. In roots, was expressed in primary and lateral roots, but not in the root tips.

The protein localises to the endoplasmic reticulum. It catalyses the reaction a long-chain fatty acid + ATP + CoA = a long-chain fatty acyl-CoA + AMP + diphosphate. The protein operates within lipid metabolism; fatty acid metabolism. Functionally, activation of long-chain fatty acids for both synthesis of cellular lipids, and degradation via beta-oxidation. Acts in both the wax and cutin pathways. Preferentially uses palmitate, palmitoleate, linoleate and eicosenoate. Seems to have a specific activity against very long-chain fatty acid (VLCFA) class with acids longer than 24 carbons (C(24)). The chain is Long chain acyl-CoA synthetase 1 (LACS1) from Arabidopsis thaliana (Mouse-ear cress).